The following is an 822-amino-acid chain: SKI/DACH domain-containing protein 1 (822 aa).

Residues 245–261 (HHHHHHHHHHHHHHHRA) are compositionally biased toward basic residues. Residues 245-370 (HHHHHHHHHH…SSSGSSQVSV (126 aa)) form a disordered region. A compositionally biased stretch (low complexity) spans 278-318 (PHLGSFPESCSSDSESSSYSDHAANDSDFGSSLSSSSNSVS). Positions 319–338 (SEEEEEEGEEEEEEEEEEEG) are enriched in acidic residues. A Glycyl lysine isopeptide (Lys-Gly) (interchain with G-Cter in SUMO2) cross-link involves residue lysine 602. Disordered regions lie at residues 658-677 (ETPSLNPLAQSQGLSCTLGS) and 706-732 (LQTPPVKPNLKSARSPRPTGKTETHEG). The segment covering 660–675 (PSLNPLAQSQGLSCTL) has biased composition (polar residues).

It belongs to the DACH/dachshund family.

The polypeptide is SKI/DACH domain-containing protein 1 (Skida1) (Mus musculus (Mouse)).